A 575-amino-acid chain; its full sequence is Transmembrane protein 108 (575 aa).

Residues Tyr9–Ile29 traverse the membrane as a helical segment. The interval Glu31–Pro169 is interaction with SH3GL2. The disordered stretch occupies residues Met65–Ser398. A compositionally biased stretch (low complexity) spans Pro74–Arg87. Residues His95–Thr115 are compositionally biased toward polar residues. Residues Pro146–Thr160 are compositionally biased toward low complexity. The interaction with DST (isoform 1) stretch occupies residues Arg173–Thr407. Residues Tyr244–Leu271 are compositionally biased toward polar residues. The segment covering Thr290–Gln318 has biased composition (low complexity). The segment covering Pro329 to Val352 has biased composition (polar residues). Positions Phe353–Thr366 are enriched in low complexity. A compositionally biased stretch (polar residues) spans Ser367–Ser398. The helical transmembrane segment at Ile469–Val489 threads the bilayer. Residues Cys490–Ile575 are interaction with CYFIP2.

In terms of assembly, interacts with DST (isoform 1). Interacts with SH3GL2. Interacts (via N-terminus) with CYFIP1 and CYFIP2; the interactions associate TMEM108 with the WAVE1 complex. In terms of processing, glycosylated.

It is found in the membrane. It localises to the postsynaptic density. The protein localises to the endosome membrane. Its subcellular location is the cell projection. The protein resides in the axon. It is found in the dendrite. It localises to the early endosome. Functionally, transmembrane protein required for proper cognitive functions. Involved in the development of dentate gyrus (DG) neuron circuitry, is necessary for AMPA receptors surface expression and proper excitatory postsynaptic currents of DG granule neurons. Regulates the organization and stability of the microtubule network of sensory neurons to allow axonal transport. Through the interaction with DST, mediates the docking of the dynein/dynactin motor complex to vesicle cargos for retrograde axonal transport. In hippocampal neurons, required for BDNF-dependent dendrite outgrowth. Cooperates with SH3GL2 and recruits the WAVE1 complex to facilitate actin-dependent BDNF:NTRK2 early endocytic trafficking and mediate signaling from early endosomes. This Homo sapiens (Human) protein is Transmembrane protein 108.